Consider the following 305-residue polypeptide: Homoserine O-acetyltransferase (305 aa).

Cysteine 142 serves as the catalytic Acyl-thioester intermediate. Lysine 163 and serine 192 together coordinate substrate. The active-site Proton acceptor is the histidine 235. Residue glutamate 237 is part of the active site. A substrate-binding site is contributed by arginine 249.

This sequence belongs to the MetA family.

Its subcellular location is the cytoplasm. It carries out the reaction L-homoserine + acetyl-CoA = O-acetyl-L-homoserine + CoA. It participates in amino-acid biosynthesis; L-methionine biosynthesis via de novo pathway; O-acetyl-L-homoserine from L-homoserine: step 1/1. Transfers an acetyl group from acetyl-CoA to L-homoserine, forming acetyl-L-homoserine. The protein is Homoserine O-acetyltransferase of Bacteroides fragilis (strain ATCC 25285 / DSM 2151 / CCUG 4856 / JCM 11019 / LMG 10263 / NCTC 9343 / Onslow / VPI 2553 / EN-2).